A 276-amino-acid polypeptide reads, in one-letter code: Omega-amidase NIT2-B (276 aa).

The region spanning 4–248 (FRLSLVQFLV…ETVISADIDL (245 aa)) is the CN hydrolase domain. The Proton acceptor role is filled by Glu-43. The active-site Proton donor is the Lys-112. The Nucleophile role is filled by Cys-153.

Belongs to the carbon-nitrogen hydrolase superfamily. NIT1/NIT2 family. In terms of assembly, homodimer.

The protein resides in the cytoplasm. It catalyses the reaction 2-oxoglutaramate + H2O = 2-oxoglutarate + NH4(+). It carries out the reaction 2-oxosuccinamate + H2O = oxaloacetate + NH4(+). Has omega-amidase activity. The role of omega-amidase is to remove potentially toxic intermediates by converting 2-oxoglutaramate and 2-oxosuccinamate to biologically useful 2-oxoglutarate and oxaloacetate, respectively. This Xenopus laevis (African clawed frog) protein is Omega-amidase NIT2-B (nit2b).